A 150-amino-acid polypeptide reads, in one-letter code: Large ribosomal subunit protein bL9 (150 aa).

The protein belongs to the bacterial ribosomal protein bL9 family.

Binds to the 23S rRNA. The polypeptide is Large ribosomal subunit protein bL9 (Vesicomyosocius okutanii subsp. Calyptogena okutanii (strain HA)).